Reading from the N-terminus, the 115-residue chain is Toxin-like structure LSTX-D1 (115 aa).

Residues 1–22 form the signal peptide; that stretch reads MKVLVLFSVLFLTLFSYSSTEA. A propeptide spanning residues 23 to 44 is cleaved from the precursor; the sequence is IDEFDSDAEEDMLSLMANEQVR. 4 disulfide bridges follow: Cys-48/Cys-63, Cys-55/Cys-72, Cys-62/Cys-87, and Cys-74/Cys-85.

Belongs to the neurotoxin 19 (CSTX) family. 01 subfamily. In terms of tissue distribution, expressed by the venom gland.

Its subcellular location is the secreted. This chain is Toxin-like structure LSTX-D1, found in Lycosa singoriensis (Wolf spider).